The chain runs to 67 residues: uncharacterized protein (67 aa).

An N-terminal signal peptide occupies residues 1 to 28 (MSHVSVIAARLLVWVGILLCLGVPQLWA). The N-linked (GlcNAc...) asparagine; by host glycan is linked to Asn39.

This is an uncharacterized protein from Invertebrate iridescent virus 3 (IIV-3).